A 212-amino-acid polypeptide reads, in one-letter code: MPVHEIRHPLIRHKLGIMRRADLSTKSFRELSQEVGALLTYEASKDLPLAESTVEGWCGTVTVEKIAGKKVTVVPILRAGIGMLDGVLSLIPGAKVSVVGVARNEETLQAHTYLERLVGELDQRLALIVDPMLATGGSMLATIDMLKRAGCREIRALVLVAAPVGIKAVLDRHPDVHIYTASIDDGLNENGYIMPGLGDAGDRIFGTKQKAE.

5-phospho-alpha-D-ribose 1-diphosphate-binding positions include arginine 78, arginine 103, and 130-138; that span reads DPMLATGGS. Residues isoleucine 193 and 198 to 200 each bind uracil; that span reads GDA. Aspartate 199 contributes to the 5-phospho-alpha-D-ribose 1-diphosphate binding site.

This sequence belongs to the UPRTase family. Mg(2+) serves as cofactor.

It catalyses the reaction UMP + diphosphate = 5-phospho-alpha-D-ribose 1-diphosphate + uracil. The protein operates within pyrimidine metabolism; UMP biosynthesis via salvage pathway; UMP from uracil: step 1/1. Allosterically activated by GTP. Its function is as follows. Catalyzes the conversion of uracil and 5-phospho-alpha-D-ribose 1-diphosphate (PRPP) to UMP and diphosphate. The sequence is that of Uracil phosphoribosyltransferase from Bordetella petrii (strain ATCC BAA-461 / DSM 12804 / CCUG 43448).